Reading from the N-terminus, the 117-residue chain is Nitrogen regulatory protein GlnK1 (117 aa).

Residues Thr-32, 40 to 42, and 92 to 95 contribute to the ADP site; these read GAQ and GSGK. ATP is bound by residues Thr-32, 40–42, and 92–95; these read GAQ and GSGK.

This sequence belongs to the P(II) protein family. In terms of assembly, homotrimer. Interacts and forms stable complexes with the glutamine synthetase GlnA1.

The protein resides in the cytoplasm. Its activity is regulated as follows. Inhibitory effects on GlnA1 are abolished in the presence of the effector 2-oxoglutarate. Its function is as follows. Involved in the regulation of nitrogen metabolism. Regulates the activity of its targets by protein-protein interaction in response to the nitrogen status of the cell. Allows finetuning control of the glutamine synthetase GlnA1 under changing nitrogen availabilities via direct protein interaction. The polypeptide is Nitrogen regulatory protein GlnK1 (Methanosarcina mazei (strain ATCC BAA-159 / DSM 3647 / Goe1 / Go1 / JCM 11833 / OCM 88) (Methanosarcina frisia)).